The following is a 597-amino-acid chain: Elongation factor 4 (597 aa).

Positions 2-184 constitute a tr-type G domain; the sequence is QHIRNFSIIA…AVISRIPPPK (183 aa). GTP contacts are provided by residues 14–19 and 131–134; these read DHGKST and NKID.

Belongs to the TRAFAC class translation factor GTPase superfamily. Classic translation factor GTPase family. LepA subfamily.

The protein resides in the cell inner membrane. It carries out the reaction GTP + H2O = GDP + phosphate + H(+). Its function is as follows. Required for accurate and efficient protein synthesis under certain stress conditions. May act as a fidelity factor of the translation reaction, by catalyzing a one-codon backward translocation of tRNAs on improperly translocated ribosomes. Back-translocation proceeds from a post-translocation (POST) complex to a pre-translocation (PRE) complex, thus giving elongation factor G a second chance to translocate the tRNAs correctly. Binds to ribosomes in a GTP-dependent manner. This chain is Elongation factor 4, found in Nitrosospira multiformis (strain ATCC 25196 / NCIMB 11849 / C 71).